An 84-amino-acid chain; its full sequence is Translation initiation factor IF-1, chloroplastic (84 aa).

Residues 1-72 (MKKQNLVEME…SKGRITYRLR (72 aa)) enclose the S1-like domain.

The protein belongs to the IF-1 family. In terms of assembly, component of the 30S ribosomal translation pre-initiation complex which assembles on the 30S ribosome in the order IF-2 and IF-3, IF-1 and N-formylmethionyl-tRNA(fMet); mRNA recruitment can occur at any time during PIC assembly.

Its subcellular location is the plastid. It localises to the chloroplast. In terms of biological role, one of the essential components for the initiation of protein synthesis. Stabilizes the binding of IF-2 and IF-3 on the 30S subunit to which N-formylmethionyl-tRNA(fMet) subsequently binds. Helps modulate mRNA selection, yielding the 30S pre-initiation complex (PIC). Upon addition of the 50S ribosomal subunit IF-1, IF-2 and IF-3 are released leaving the mature 70S translation initiation complex. This chain is Translation initiation factor IF-1, chloroplastic, found in Spirogyra maxima (Green alga).